The sequence spans 336 residues: 3-isopropylmalate dehydrogenase (336 aa).

The substrate site is built by R87, R97, R121, and D211. Mg(2+) is bound by residues D211, D235, and D239. 271 to 283 (GSAPDIAGQGVAD) is a binding site for NAD(+).

This sequence belongs to the isocitrate and isopropylmalate dehydrogenases family. LeuB type 2 subfamily. In terms of assembly, homodimer. Requires Mg(2+) as cofactor. It depends on Mn(2+) as a cofactor.

Its subcellular location is the cytoplasm. The enzyme catalyses (2R,3S)-3-isopropylmalate + NAD(+) = 4-methyl-2-oxopentanoate + CO2 + NADH. The protein operates within amino-acid biosynthesis; L-leucine biosynthesis; L-leucine from 3-methyl-2-oxobutanoate: step 3/4. Functionally, catalyzes the oxidation of 3-carboxy-2-hydroxy-4-methylpentanoate (3-isopropylmalate) to 3-carboxy-4-methyl-2-oxopentanoate. The product decarboxylates to 4-methyl-2 oxopentanoate. This is 3-isopropylmalate dehydrogenase from Mycobacterium avium (strain 104).